We begin with the raw amino-acid sequence, 144 residues long: Large ribosomal subunit protein uL15 (144 aa).

The tract at residues Met-1–Gly-53 is disordered. Residues Arg-21–Gly-31 show a composition bias toward gly residues.

This sequence belongs to the universal ribosomal protein uL15 family. In terms of assembly, part of the 50S ribosomal subunit.

Its function is as follows. Binds to the 23S rRNA. This is Large ribosomal subunit protein uL15 from Pectobacterium atrosepticum (strain SCRI 1043 / ATCC BAA-672) (Erwinia carotovora subsp. atroseptica).